The chain runs to 316 residues: Serine protease 45 (316 aa).

An N-terminal signal peptide occupies residues methionine 1–glycine 38. Positions tryptophan 49–serine 290 constitute a Peptidase S1 domain. A disulfide bridge links cysteine 74 with cysteine 90. Histidine 89 acts as the Charge relay system in catalysis. A glycan (N-linked (GlcNAc...) asparagine) is linked at asparagine 110. Aspartate 137 (charge relay system) is an active-site residue. N-linked (GlcNAc...) asparagine glycosylation is found at asparagine 162 and asparagine 186. 3 disulfide bridges follow: cysteine 171/cysteine 248, cysteine 206/cysteine 229, and cysteine 238/cysteine 266. Catalysis depends on serine 242, which acts as the Charge relay system.

This sequence belongs to the peptidase S1 family.

It is found in the secreted. The protein is Serine protease 45 (PRSS45) of Bos taurus (Bovine).